Consider the following 184-residue polypeptide: ATP synthase subunit b, chloroplastic (184 aa).

The helical transmembrane segment at 31 to 49 threads the bilayer; that stretch reads IINSSVVLSVLIYFGKGVL.

The protein belongs to the ATPase B chain family. As to quaternary structure, F-type ATPases have 2 components, F(1) - the catalytic core - and F(0) - the membrane proton channel. F(1) has five subunits: alpha(3), beta(3), gamma(1), delta(1), epsilon(1). F(0) has four main subunits: a(1), b(1), b'(1) and c(10-14). The alpha and beta chains form an alternating ring which encloses part of the gamma chain. F(1) is attached to F(0) by a central stalk formed by the gamma and epsilon chains, while a peripheral stalk is formed by the delta, b and b' chains.

The protein localises to the plastid. It is found in the chloroplast thylakoid membrane. F(1)F(0) ATP synthase produces ATP from ADP in the presence of a proton or sodium gradient. F-type ATPases consist of two structural domains, F(1) containing the extramembraneous catalytic core and F(0) containing the membrane proton channel, linked together by a central stalk and a peripheral stalk. During catalysis, ATP synthesis in the catalytic domain of F(1) is coupled via a rotary mechanism of the central stalk subunits to proton translocation. Functionally, component of the F(0) channel, it forms part of the peripheral stalk, linking F(1) to F(0). The sequence is that of ATP synthase subunit b, chloroplastic from Pinus thunbergii (Japanese black pine).